A 357-amino-acid polypeptide reads, in one-letter code: Glycerol-3-phosphate dehydrogenase [NAD(P)+] (357 aa).

Residues Ser30, Phe31, Arg51, and Lys124 each contribute to the NADPH site. The sn-glycerol 3-phosphate site is built by Lys124 and Gly152. Position 156 (Ala156) interacts with NADPH. Sn-glycerol 3-phosphate contacts are provided by Lys207, Asp260, Ser270, Arg271, and Asn272. Catalysis depends on Lys207, which acts as the Proton acceptor. Arg271 is an NADPH binding site. NADPH is bound at residue Glu297.

The protein belongs to the NAD-dependent glycerol-3-phosphate dehydrogenase family.

Its subcellular location is the cytoplasm. It carries out the reaction sn-glycerol 3-phosphate + NAD(+) = dihydroxyacetone phosphate + NADH + H(+). It catalyses the reaction sn-glycerol 3-phosphate + NADP(+) = dihydroxyacetone phosphate + NADPH + H(+). It participates in membrane lipid metabolism; glycerophospholipid metabolism. Functionally, catalyzes the reduction of the glycolytic intermediate dihydroxyacetone phosphate (DHAP) to sn-glycerol 3-phosphate (G3P), the key precursor for phospholipid synthesis. This chain is Glycerol-3-phosphate dehydrogenase [NAD(P)+], found in Acinetobacter baylyi (strain ATCC 33305 / BD413 / ADP1).